We begin with the raw amino-acid sequence, 265 residues long: Type III pantothenate kinase (265 aa).

Position 6-13 (6-13) interacts with ATP; the sequence is DVGNTHTV. A substrate-binding site is contributed by 112-115; it reads GADR. The active-site Proton acceptor is the Asp114. Asp134 contacts K(+). Thr137 contacts ATP. Substrate is bound at residue Thr189.

The protein belongs to the type III pantothenate kinase family. In terms of assembly, homodimer. Requires NH4(+) as cofactor. The cofactor is K(+).

The protein resides in the cytoplasm. It catalyses the reaction (R)-pantothenate + ATP = (R)-4'-phosphopantothenate + ADP + H(+). It participates in cofactor biosynthesis; coenzyme A biosynthesis; CoA from (R)-pantothenate: step 1/5. Functionally, catalyzes the phosphorylation of pantothenate (Pan), the first step in CoA biosynthesis. The protein is Type III pantothenate kinase of Streptomyces avermitilis (strain ATCC 31267 / DSM 46492 / JCM 5070 / NBRC 14893 / NCIMB 12804 / NRRL 8165 / MA-4680).